We begin with the raw amino-acid sequence, 123 residues long: Late histone H2B.L3 (123 aa).

A compositionally biased stretch (low complexity) spans 1 to 10 (MPAKAQAAGK). Residues 1 to 32 (MPAKAQAAGKKGSKKAKAPKPSGDKKRRRKRK) form a disordered region. A glycan (O-linked (GlcNAc) serine) is linked at Ser110. Residue Lys118 forms a Glycyl lysine isopeptide (Lys-Gly) (interchain with G-Cter in ubiquitin) linkage.

Belongs to the histone H2B family. In terms of assembly, the nucleosome is a histone octamer containing two molecules each of H2A, H2B, H3 and H4 assembled in one H3-H4 heterotetramer and two H2A-H2B heterodimers. The octamer wraps approximately 147 bp of DNA. Post-translationally, monoubiquitination of Lys-118 gives a specific tag for epigenetic transcriptional activation and is also prerequisite for histone H3 'Lys-4' and 'Lys-79' methylation. GlcNAcylation at Ser-110 promotes monoubiquitination of Lys-118. It fluctuates in response to extracellular glucose, and associates with transcribed genes.

It is found in the nucleus. Its subcellular location is the chromosome. Functionally, core component of nucleosome. Nucleosomes wrap and compact DNA into chromatin, limiting DNA accessibility to the cellular machineries which require DNA as a template. Histones thereby play a central role in transcription regulation, DNA repair, DNA replication and chromosomal stability. DNA accessibility is regulated via a complex set of post-translational modifications of histones, also called histone code, and nucleosome remodeling. The protein is Late histone H2B.L3 of Strongylocentrotus purpuratus (Purple sea urchin).